Consider the following 198-residue polypeptide: Superoxide dismutase [Fe] (198 aa).

Fe(3+) is bound by residues histidine 27, histidine 74, aspartate 157, and histidine 161.

The protein belongs to the iron/manganese superoxide dismutase family. Homodimer. Fe(3+) serves as cofactor.

It carries out the reaction 2 superoxide + 2 H(+) = H2O2 + O2. Its function is as follows. Destroys superoxide anion radicals which are normally produced within the cells and which are toxic to biological systems. This is Superoxide dismutase [Fe] (sodB) from Pseudomonas putida (Arthrobacter siderocapsulatus).